The chain runs to 55 residues: uncharacterized protein (55 aa).

A helical transmembrane segment spans residues 7–24 (VALVGAVLATLTACTGHI).

The protein localises to the membrane. This is an uncharacterized protein from Escherichia coli O157:H7.